Here is a 267-residue protein sequence, read N- to C-terminus: Glutamate racemase (267 aa).

Residues 13–14 (DS) and 45–46 (YS) contribute to the substrate site. Catalysis depends on Cys-77, which acts as the Proton donor/acceptor. 78 to 79 (NT) is a binding site for substrate. Residue Cys-188 is the Proton donor/acceptor of the active site. 189–190 (TH) serves as a coordination point for substrate.

The protein belongs to the aspartate/glutamate racemases family.

It catalyses the reaction L-glutamate = D-glutamate. It participates in cell wall biogenesis; peptidoglycan biosynthesis. Provides the (R)-glutamate required for cell wall biosynthesis. This is Glutamate racemase from Histophilus somni (strain 129Pt) (Haemophilus somnus).